We begin with the raw amino-acid sequence, 205 residues long: Protease (205 aa).

Catalysis depends on residues His-55, Asp-72, and Cys-122.

This sequence belongs to the peptidase C5 family. As to quaternary structure, interacts with protease cofactor pVI-C; this interaction is necessary for protease activation.

Its subcellular location is the virion. The protein resides in the host nucleus. The enzyme catalyses Cleaves proteins of the adenovirus and its host cell at two consensus sites: -Yaa-Xaa-Gly-Gly-|-Xaa- and -Yaa-Xaa-Gly-Xaa-|-Gly- (in which Yaa is Met, Ile or Leu, and Xaa is any amino acid).. With respect to regulation, requires DNA and protease cofactor for maximal activation. Inside nascent virions, becomes partially activated by binding to the viral DNA, allowing it to cleave the cofactor that binds to the protease and fully activates it. Actin, like the viral protease cofactor, seems to act as a cofactor in the cleavage of cytokeratin 18 and of actin itself. Its function is as follows. Cleaves viral precursor proteins (pTP, pIIIa, pVI, pVII, pVIII, and pX) inside newly assembled particles giving rise to mature virions. Protease complexed to its cofactor slides along the viral DNA to specifically locate and cleave the viral precursors. Mature virions have a weakened organization compared to the unmature virions, thereby facilitating subsequent uncoating. Without maturation, the particle lacks infectivity and is unable to uncoat. Late in adenovirus infection, in the cytoplasm, may participate in the cytoskeleton destruction. Cleaves host cell cytoskeletal keratins K7 and K18. The chain is Protease from Galliformes (FAdV-8).